The following is a 187-amino-acid chain: Large ribosomal subunit protein uL22 (187 aa).

The span at V159–K171 shows a compositional bias: basic and acidic residues. A disordered region spans residues V159 to F187. Basic residues predominate over residues K172 to F187.

This sequence belongs to the universal ribosomal protein uL22 family.

The chain is Large ribosomal subunit protein uL22 (rpl-17) from Caenorhabditis elegans.